Here is a 458-residue protein sequence, read N- to C-terminus: tRNA modification GTPase MnmE (458 aa).

3 residues coordinate (6S)-5-formyl-5,6,7,8-tetrahydrofolate: Arg22, Glu84, and Arg123. In terms of domain architecture, TrmE-type G spans 220 to 379 (GIATAIIGRP…LEKAIADLFF (160 aa)). Asn230 provides a ligand contact to K(+). GTP is bound by residues 230 to 235 (NVGKSS), 249 to 255 (TDIAGTT), and 274 to 277 (DTAG). Ser234 contacts Mg(2+). Positions 249, 251, and 254 each coordinate K(+). Mg(2+) is bound at residue Thr255. Lys458 contributes to the (6S)-5-formyl-5,6,7,8-tetrahydrofolate binding site.

This sequence belongs to the TRAFAC class TrmE-Era-EngA-EngB-Septin-like GTPase superfamily. TrmE GTPase family. As to quaternary structure, homodimer. Heterotetramer of two MnmE and two MnmG subunits. K(+) is required as a cofactor.

Its subcellular location is the cytoplasm. In terms of biological role, exhibits a very high intrinsic GTPase hydrolysis rate. Involved in the addition of a carboxymethylaminomethyl (cmnm) group at the wobble position (U34) of certain tRNAs, forming tRNA-cmnm(5)s(2)U34. The protein is tRNA modification GTPase MnmE of Bacillus cereus (strain ATCC 14579 / DSM 31 / CCUG 7414 / JCM 2152 / NBRC 15305 / NCIMB 9373 / NCTC 2599 / NRRL B-3711).